The following is a 319-amino-acid chain: RNA polymerase II holoenzyme cyclin-like subunit (319 aa).

One can recognise a Cyclin N-terminal domain in the interval 53 to 142 (QQLIRLAKRL…LGECEFFMIS (90 aa)). Over residues 237–251 (QGQQAQGGMPEPAAA) the composition is skewed to low complexity. The disordered stretch occupies residues 237–261 (QGQQAQGGMPEPAAAEPKEKRQQDR). A compositionally biased stretch (basic and acidic residues) spans 252 to 261 (EPKEKRQQDR).

The protein belongs to the cyclin family. Cyclin C subfamily. In terms of assembly, component of the SRB8-11 complex, a regulatory module of the Mediator complex. Interacts with SSN3/FCK1.

It localises to the nucleus. In terms of biological role, component of the SRB8-11 complex. The SRB8-11 complex is a regulatory module of the Mediator complex which is itself involved in regulation of basal and activated RNA polymerase II-dependent transcription. The SRB8-11 complex may be involved in the transcriptional repression of a subset of genes regulated by Mediator. It may inhibit the association of the Mediator complex with RNA polymerase II to form the holoenzyme complex. The SRB8-11 complex phosphorylates the C-terminal domain (CTD) of the largest subunit of RNA polymerase II. May play a role in signal transduction pathways regulating secondary metabolism and fungal development (conidiation). In Gibberella moniliformis (Maize ear and stalk rot fungus), this protein is RNA polymerase II holoenzyme cyclin-like subunit (SSN8).